A 407-amino-acid polypeptide reads, in one-letter code: Elongation factor Tu (407 aa).

A tr-type G domain is found at 10–217; the sequence is KPHVNVGTIG…TLDTYIPDPE (208 aa). Residues 19–26 are G1; the sequence is GHVDHGKT. GTP is bound at residue 19–26; the sequence is GHVDHGKT. Residue Thr-26 participates in Mg(2+) binding. Residues 60 to 64 are G2; the sequence is GITIS. The G3 stretch occupies residues 81-84; that stretch reads DCPG. GTP is bound by residues 81–85 and 136–139; these read DCPGH and NKSD. A G4 region spans residues 136-139; sequence NKSD. Residues 184 to 186 are G5; the sequence is SAL.

This sequence belongs to the TRAFAC class translation factor GTPase superfamily. Classic translation factor GTPase family. EF-Tu/EF-1A subfamily. In terms of assembly, monomer.

The protein localises to the cytoplasm. It carries out the reaction GTP + H2O = GDP + phosphate + H(+). GTP hydrolase that promotes the GTP-dependent binding of aminoacyl-tRNA to the A-site of ribosomes during protein biosynthesis. In Marinomonas sp. (strain MWYL1), this protein is Elongation factor Tu.